A 51-amino-acid polypeptide reads, in one-letter code: Mitochondrial import receptor subunit TOM5 homolog (51 aa).

An N-acetylmethionine modification is found at Met1. Residue Lys10 forms a Glycyl lysine isopeptide (Lys-Gly) (interchain with G-Cter in SUMO2) linkage. Residues 27–45 form a helical membrane-spanning segment; it reads SIRNFLIYVALLRVTPYIL.

This sequence belongs to the Tom5 family. Forms part of the preprotein translocase complex of the outer mitochondrial membrane (TOM complex) which consists of at least 7 different proteins (TOMM5, TOMM6, TOMM7, TOMM20, TOMM22, TOMM40 and TOMM70).

It localises to the mitochondrion outer membrane. This chain is Mitochondrial import receptor subunit TOM5 homolog, found in Mus musculus (Mouse).